The chain runs to 439 residues: N5-carboxyaminoimidazole ribonucleotide synthase (439 aa).

Residues Lys113, Lys160, 197 to 200 (EERV), Glu205, and 283 to 284 (NE) each bind ATP. The ATP-grasp domain maps to 117-313 (RRRLAALGAA…QFEQHLRAVL (197 aa)).

The protein belongs to the PurK/PurT family. In terms of assembly, homodimer.

The enzyme catalyses 5-amino-1-(5-phospho-beta-D-ribosyl)imidazole + hydrogencarbonate + ATP = 5-carboxyamino-1-(5-phospho-D-ribosyl)imidazole + ADP + phosphate + 2 H(+). The protein operates within purine metabolism; IMP biosynthesis via de novo pathway; 5-amino-1-(5-phospho-D-ribosyl)imidazole-4-carboxylate from 5-amino-1-(5-phospho-D-ribosyl)imidazole (N5-CAIR route): step 1/2. Functionally, catalyzes the ATP-dependent conversion of 5-aminoimidazole ribonucleotide (AIR) and HCO(3)(-) to N5-carboxyaminoimidazole ribonucleotide (N5-CAIR). The chain is N5-carboxyaminoimidazole ribonucleotide synthase from Mycobacterium leprae (strain TN).